The chain runs to 152 residues: MMKKIDVKILDARVGTDFPLPTYATSGSAGLDLRACLNEATVLQPGATTLLPTGLAIHIADPQLAAVILPRSGLGHKHGVVLGNLVGLIDSDYQGPLMVSVWNRGQDSFTIEPGERIAQMVFVPVVQAEFNLVNDFDASVRGEGGFGHSGRQ.

Substrate-binding positions include 71 to 73 (RSG), Asn-84, 88 to 90 (LID), and Met-98.

This sequence belongs to the dUTPase family. Mg(2+) is required as a cofactor.

The catalysed reaction is dUTP + H2O = dUMP + diphosphate + H(+). It functions in the pathway pyrimidine metabolism; dUMP biosynthesis; dUMP from dCTP (dUTP route): step 2/2. Functionally, this enzyme is involved in nucleotide metabolism: it produces dUMP, the immediate precursor of thymidine nucleotides and it decreases the intracellular concentration of dUTP so that uracil cannot be incorporated into DNA. This is Deoxyuridine 5'-triphosphate nucleotidohydrolase from Erwinia tasmaniensis (strain DSM 17950 / CFBP 7177 / CIP 109463 / NCPPB 4357 / Et1/99).